A 356-amino-acid polypeptide reads, in one-letter code: MADFFASSFWTGFLWPLIVMIAQSVLLLVVLLVAIAYILLADRKIWAAVQIRRGPNVVGPWGLFQSFADLLKFVLKEPIIPAGANKGVFLLAPLVSCVLALAAWAVIPTNLGWAIADINVGILFIFAISSLSIYGIIMAGWSSNSKYPFLAALRSAAQMVSYEVSIGFVIITVLLCAGTLNLSAVVEAQHARGLASLIGLPQLTILNWYVWPLFPMFVVFYVSALAETNRPPFDLVEAESELVAGFMVEYGSTPYLLFMLGEYVAITTMCALATILFLGGWLPPIDLPPFNWVPGVIWFALKLFFMFFLIAMAKAIVPRYRYDQLMRLGWKVFLPLSLVMVVIVAGVLHFAGIAPK.

Transmembrane regions (helical) follow at residues 18-38, 87-107, 120-140, 166-186, 205-225, 265-285, 292-312, and 333-353; these read IVMI…IAYI, GVFL…WAVI, VGIL…IMAG, IGFV…SAVV, ILNW…VSAL, AITT…LPPI, WVPG…LIAM, and FLPL…FAGI.

The protein belongs to the complex I subunit 1 family. In terms of assembly, NDH-1 is composed of 14 different subunits. Subunits NuoA, H, J, K, L, M, N constitute the membrane sector of the complex.

It localises to the cell inner membrane. The enzyme catalyses a quinone + NADH + 5 H(+)(in) = a quinol + NAD(+) + 4 H(+)(out). In terms of biological role, NDH-1 shuttles electrons from NADH, via FMN and iron-sulfur (Fe-S) centers, to quinones in the respiratory chain. The immediate electron acceptor for the enzyme in this species is believed to be ubiquinone. Couples the redox reaction to proton translocation (for every two electrons transferred, four hydrogen ions are translocated across the cytoplasmic membrane), and thus conserves the redox energy in a proton gradient. This subunit may bind ubiquinone. This Bradyrhizobium sp. (strain BTAi1 / ATCC BAA-1182) protein is NADH-quinone oxidoreductase subunit H.